The following is a 379-amino-acid chain: MECREITEGSTTFTAPVQDETTQFPPGSAPVFYNTKMEFNRDMTVLLTKIVQPEDYLDAMAATGVRGLRIANEAKIPVTINDRDEQAVKIIKYNAEKLGGDISVTCDDANRLMCTSRFDSIDLDPFGTPVPFLDAASRAAKHYLFVTATDTAPLCGAHFKAGCRRYFATPRNTEYHAEVGLRMMMGTMARELVKYDRGMKPILSYAKSHYFRSHVRVLGKVTAADETLAQIGFVMQCPKCLYREEQKGSLYPKMHICPHCGVETVPVGPLWMGPLQEKEILAEMQTALAELQFGTKRQMEKMLTFLLAEPETCTYYDYHIISRNMKVSPPNMEELIASLNEAGYYTTRTHFCDTGIKTTAPLPLIEEKIRLWNAKNLQM.

The disordered stretch occupies residues 1-26 (MECREITEGSTTFTAPVQDETTQFPP). Residues 4 to 369 (REITEGSTTF…APLPLIEEKI (366 aa)) form the Trm1 methyltransferase domain. Over residues 8 to 25 (EGSTTFTAPVQDETTQFP) the composition is skewed to polar residues. 5 residues coordinate S-adenosyl-L-methionine: Arg-41, Arg-66, Asp-82, Asp-108, and Ala-109. The Zn(2+) site is built by Cys-237, Cys-240, Cys-257, and Cys-260.

Belongs to the class I-like SAM-binding methyltransferase superfamily. Trm1 family.

It carries out the reaction guanosine(26) in tRNA + 2 S-adenosyl-L-methionine = N(2)-dimethylguanosine(26) in tRNA + 2 S-adenosyl-L-homocysteine + 2 H(+). Its function is as follows. Dimethylates a single guanine residue at position 26 of a number of tRNAs using S-adenosyl-L-methionine as donor of the methyl groups. This Methanocorpusculum labreanum (strain ATCC 43576 / DSM 4855 / Z) protein is tRNA (guanine(26)-N(2))-dimethyltransferase.